A 137-amino-acid chain; its full sequence is MAQLTVQVVTPDGIRYDHHASLITVRTPDGEMGILPGHINLIAPLIVHQMKINRSHQEGVDWVAVNGGIIEVNEDQVTIVADSAERARDIDLNRAERAKERAERALEKAQTTQNIDEMRRAEVALRRAINRISVGKK.

Belongs to the ATPase epsilon chain family. As to quaternary structure, F-type ATPases have 2 components, CF(1) - the catalytic core - and CF(0) - the membrane proton channel. CF(1) has five subunits: alpha(3), beta(3), gamma(1), delta(1), epsilon(1). CF(0) has three main subunits: a, b and c.

It is found in the cell membrane. In terms of biological role, produces ATP from ADP in the presence of a proton gradient across the membrane. This is ATP synthase epsilon chain from Streptococcus agalactiae serotype III (strain NEM316).